The sequence spans 431 residues: MGNQLQLLPENEEEEEDDMETEDRDGEDVEKPSIINFDTSLPTSHAYLGSDMEEFHGRTLHDEDSVQNLPVLPHVALILIPGQTLPLQLFRPQEVSMFRNLVSQDRTFAVLAHSPDPSGTETKAEFGTTAEIYAFREEQEYGIETVKIKAVGRQRFRVHDIRTQADGIRQAKVQILPERILPDPLCALQFLPRLHTHSPQTKHTQTTPPQKRCSQNYRQKKLHCASMTSWPPWVYSLYDSKTLMSRVKKQLHEWDENLKDESLPTNPTDFSYRVAACLPIDDALRLQLLKIGSAIQRLRCELDIMDRCTSLCCKQCQDTEITSKNEIFSLSLYGPMAAYVNPHGYVHETLTVYKASNLNLIGRPSTLHSWFPGYAWTIAQCRTCSSHMGWKFSAVKKDLSPPRFWGLTRSALLPTIPQGEEGVEGSRLLCL.

Positions 1-36 are disordered; the sequence is MGNQLQLLPENEEEEEDDMETEDRDGEDVEKPSIIN. Residues 10–28 show a composition bias toward acidic residues; that stretch reads ENEEEEEDDMETEDRDGED. Positions 69–309 constitute a Lon N-terminal domain; that stretch reads LPVLPHVALI…CELDIMDRCT (241 aa). One can recognise a CULT domain in the interval 308 to 416; sequence CTSLCCKQCQ…LTRSALLPTI (109 aa). 2 residues coordinate Zn(2+): Cys313 and Cys316. (S)-thalidomide contacts are provided by His368, Trp370, and Trp376. Zn(2+) contacts are provided by Cys381 and Cys384.

It belongs to the CRBN family. In terms of assembly, component of a DCX (DDB1-CUL4-X-box) protein ligase complex. Highly expressed in brain, head, vasculature otic vesicles and developing pectoral fins.

It is found in the cytoplasm. The protein resides in the nucleus. Its pathway is protein modification; protein ubiquitination. Its function is as follows. Substrate recognition component of a DCX (DDB1-CUL4-X-box) E3 protein ligase complex that mediates the ubiquitination and subsequent proteasomal degradation of target proteins, such as MEIS2. Normal degradation of key regulatory proteins is required for normal limb outgrowth and expression of the fibroblast growth factor FGF8. Maintains presynaptic glutamate release and consequently cognitive functions, such as memory and learning, by negatively regulating large-conductance calcium-activated potassium (BK) channels in excitatory neurons. Likely to function by regulating the assembly and neuronal surface expression of BK channels via its interaction with KCNT1. May also be involved in regulating anxiety-like behaviors via a BK channel-independent mechanism. The sequence is that of Protein cereblon (crbn) from Danio rerio (Zebrafish).